The sequence spans 385 residues: Guanine nucleotide-binding protein alpha-5 subunit (385 aa).

Residue G2 is the site of N-myristoyl glycine attachment. C6 is lipidated: S-palmitoyl cysteine. The region spanning 32–385 is the G-alpha domain; sequence RKIKMLLLGV…GKNYEDTNLE (354 aa). A G1 motif region spans residues 35-48; sequence KMLLLGVTDSGKST. GTP is bound by residues 40–47, 174–180, 199–203, 298–301, and A357; these read GVTDSGKS, IHMRQTT, DVGGQ, and NKKD. Positions 47 and 180 each coordinate Mg(2+). The segment at 172-180 is G2 motif; sequence DLIHMRQTT. The interval 195–204 is G3 motif; that stretch reads IRLIDVGGQK. Positions 294 to 301 are G4 motif; the sequence is MLFLNKKD. The interval 355-360 is G5 motif; the sequence is TQATVT.

The protein belongs to the G-alpha family. G proteins are composed of 3 units; alpha, beta and gamma. The alpha chain contains the guanine nucleotide binding site.

Its function is as follows. Guanine nucleotide-binding proteins (G proteins) are involved as modulators or transducers in various transmembrane signaling systems. The sequence is that of Guanine nucleotide-binding protein alpha-5 subunit (gpa-5) from Caenorhabditis elegans.